The primary structure comprises 224 residues: Prophage repressor CohE (224 aa).

In Escherichia coli (strain K12), this protein is Prophage repressor CohE (cohE).